The primary structure comprises 122 residues: Large ribosomal subunit protein uL14 (122 aa).

This sequence belongs to the universal ribosomal protein uL14 family. As to quaternary structure, part of the 50S ribosomal subunit. Forms a cluster with proteins L3 and L19. In the 70S ribosome, L14 and L19 interact and together make contacts with the 16S rRNA in bridges B5 and B8.

Its function is as follows. Binds to 23S rRNA. Forms part of two intersubunit bridges in the 70S ribosome. The protein is Large ribosomal subunit protein uL14 of Thermodesulfovibrio yellowstonii (strain ATCC 51303 / DSM 11347 / YP87).